The sequence spans 664 residues: Chaperone protein DnaK (664 aa).

Thr-201 carries the post-translational modification Phosphothreonine; by autocatalysis. 2 disordered regions span residues 516–538 (DAEK…NEAD) and 578–664 (APVE…KPND). The span at 578–592 (APVEKIKDASEELSR) shows a compositional bias: basic and acidic residues. Composition is skewed to low complexity over residues 600 to 617 (AMQS…ANAQ) and 638 to 649 (AGNSASSNSNNE).

It belongs to the heat shock protein 70 family.

Its function is as follows. Acts as a chaperone. The chain is Chaperone protein DnaK from Chlamydia caviae (strain ATCC VR-813 / DSM 19441 / 03DC25 / GPIC) (Chlamydophila caviae).